A 268-amino-acid polypeptide reads, in one-letter code: Inositol polyphosphate multikinase (268 aa).

ATP-binding positions include K27, 86–88, and D99; that span reads ENI. Position 127 to 135 (127 to 135) interacts with substrate; the sequence is TSGSLGFRI. D235 lines the ATP pocket.

Belongs to the inositol phosphokinase (IPK) family.

Its subcellular location is the cytoplasm. The protein resides in the nucleus. The enzyme catalyses 1D-myo-inositol 1,4,5-trisphosphate + 2 ATP = 1D-myo-inositol 1,3,4,5,6-pentakisphosphate + 2 ADP + 2 H(+). It carries out the reaction 1D-myo-inositol 1,4,5-trisphosphate + ATP = 1D-myo-inositol 1,4,5,6-tetrakisphosphate + ADP + H(+). It catalyses the reaction 1D-myo-inositol 1,4,5-trisphosphate + ATP = 1D-myo-inositol 1,3,4,5-tetrakisphosphate + ADP + H(+). The catalysed reaction is 1D-myo-inositol 1,4,5,6-tetrakisphosphate + ATP = 1D-myo-inositol 1,3,4,5,6-pentakisphosphate + ADP + H(+). Inositol phosphate kinase with both monophosphoinositol and diphosphoinositol polyphosphate synthase activities. Able to phosphorylate inositol 1,4,5-trisphosphate (Ins(1,4,5)P3) on both the carbon-3 and carbon-6 positions to synthesize inositol 1,3,4,5-tetrakisphosphate (Ins(1,3,4,5)P4) and inositol 1,4,5,6-tetrakisphosphate (Ins(1,4,5,6)P4), and then to subsequently phosphorylate and convert either isomer of InsP4 to inositol 1,3,4,5,6-pentakisphosphate (Ins(1,3,4,5,6)P5). Also converts (Ins(1,3,4,5,6)P5) to InsP6. Also has a role in transcription regulation. The catalytic activity is required for PHO gene repression by phosphate and for NCR gene activation in response to nitrogen availability, indicating a role for inositol pyrophosphates in these controls. Inositol polyphosphates may be involved in the regulation of chromatin remodeling of transcription. This is Inositol polyphosphate multikinase (arg82) from Schizosaccharomyces pombe (strain 972 / ATCC 24843) (Fission yeast).